The sequence spans 104 residues: L-rhamnose mutarotase (104 aa).

Residue Tyr-18 coordinates substrate. The Proton donor role is filled by His-22. Residues Tyr-41 and 76 to 77 (WW) each bind substrate.

The protein belongs to the rhamnose mutarotase family. As to quaternary structure, homodimer.

It localises to the cytoplasm. It catalyses the reaction alpha-L-rhamnose = beta-L-rhamnose. It functions in the pathway carbohydrate metabolism; L-rhamnose metabolism. Involved in the anomeric conversion of L-rhamnose. The chain is L-rhamnose mutarotase from Burkholderia orbicola (strain MC0-3).